The following is a 360-amino-acid chain: Dihydroorotate dehydrogenase (quinone) (360 aa).

Residues 66 to 70 (AGFDK) and T90 contribute to the FMN site. Residue K70 participates in substrate binding. 115–119 (NRMGF) contacts substrate. Residues N143 and N176 each contribute to the FMN site. Position 176 (N176) interacts with substrate. The active-site Nucleophile is S179. Substrate is bound at residue N181. FMN contacts are provided by K212 and T240. A substrate-binding site is contributed by 241–242 (NT). Residues G264, G293, and 314–315 (YT) each bind FMN.

It belongs to the dihydroorotate dehydrogenase family. Type 2 subfamily. In terms of assembly, monomer. FMN is required as a cofactor.

The protein resides in the cell membrane. The enzyme catalyses (S)-dihydroorotate + a quinone = orotate + a quinol. It functions in the pathway pyrimidine metabolism; UMP biosynthesis via de novo pathway; orotate from (S)-dihydroorotate (quinone route): step 1/1. Catalyzes the conversion of dihydroorotate to orotate with quinone as electron acceptor. The polypeptide is Dihydroorotate dehydrogenase (quinone) (Mycobacterium marinum (strain ATCC BAA-535 / M)).